Reading from the N-terminus, the 571-residue chain is Putative clathrin assembly protein At2g01600 (571 aa).

The ENTH domain maps to 24–161; that stretch reads RVNSEYADLD…ECFRVLKYDT (138 aa). Disordered stretches follow at residues 325 to 346 and 474 to 571; these read YRPD…REML and PAPN…TGLI. Over residues 337–346 the composition is skewed to basic and acidic residues; sequence EPSHEEREML. A compositionally biased stretch (low complexity) spans 508–522; that stretch reads QQTYQHQPQPTYQHQ. Polar residues-rich tracts occupy residues 523–532 and 543–571; these read SNPPTNNSNP and PVSQ…TGLI.

The protein resides in the membrane. The protein localises to the clathrin-coated pit. Its subcellular location is the golgi apparatus. It localises to the cytoplasmic vesicle. It is found in the clathrin-coated vesicle. The protein is Putative clathrin assembly protein At2g01600 of Arabidopsis thaliana (Mouse-ear cress).